The primary structure comprises 273 residues: Large ribosomal subunit protein uL2cz/uL2cy (273 aa).

Disordered regions lie at residues 1 to 27 (MAKH…SNPR) and 225 to 273 (PVDH…RRRK).

The protein belongs to the universal ribosomal protein uL2 family. As to quaternary structure, part of the 50S ribosomal subunit.

The protein resides in the plastid. The protein localises to the chloroplast. The polypeptide is Large ribosomal subunit protein uL2cz/uL2cy (rpl2-A) (Lolium perenne (Perennial ryegrass)).